The primary structure comprises 483 residues: Prenyltransferase vrtC (483 aa).

Belongs to the tryptophan dimethylallyltransferase family.

It functions in the pathway secondary metabolite biosynthesis; terpenoid biosynthesis. Prenyltransferase; part of the gene cluster that mediates the biosynthesis of viridicatumtoxin, a tetracycline-like fungal meroterpenoid with a unique, fused spirobicyclic ring system. The first step of the pathway is the production of the malonamoyl-CoA starter unit for the polyketide synthase vrtA. The aldolase vrtJ may be involved in the synthesis of the malonamate substrate for malonamoyl-CoA synthetase vrtB. The polyketide synthase vrtA then may utilize the malonamoyl-CoA starter unit, followed by sequential condensation of eight malonyl-CoA units to form the polyketide backbone. The cyclization of the last ring could be mediated by the lactamase-like protein vrtG. The proposed post-PKS tailoring steps are a hydroxylation at C5 catalyzed the cytochrome P450 monooxygenase vrtE, a hydroxylation at C12a catalyzed by VrtH and/or VrtI, and an O-methylation by the O-methyltransferase vrtF. VrtC is then proposed to catalyze the transfer of a geranyl group synthesized by vrtD to the aromatic C ring of the tetracyclic polyketide intermediate of viridicatumtoxin to yield previridicatumtoxin. Finally, the cytochrome P450 monooxygenase vrtK catalyzes the spirocyclization of the geranyl moiety of previridicatumtoxin to afford viridicatumtoxin. The polypeptide is Prenyltransferase vrtC (Penicillium aethiopicum).